The sequence spans 1322 residues: Phosphoribosylformylglycinamidine synthase (1322 aa).

300–311 (GASTGAGGEIRD) contacts ATP. Polar residues predominate over residues 593–608 (QQTPQRANHTETSPTP). The tract at residues 593-613 (QQTPQRANHTETSPTPNTLPP) is disordered. Ala-702 provides a ligand contact to ATP. Positions 703, 742, 746, and 915 each coordinate Mg(2+). Residue Ser-917 participates in ATP binding. The Glutamine amidotransferase type-1 domain occupies 1073 to 1322 (VAILREQGIN…LFRNARAWVG (250 aa)). Cys-1166 (nucleophile) is an active-site residue. Residues His-1287 and Glu-1289 contribute to the active site.

The protein in the N-terminal section; belongs to the FGAMS family. In terms of assembly, monomer.

The protein resides in the cytoplasm. The enzyme catalyses N(2)-formyl-N(1)-(5-phospho-beta-D-ribosyl)glycinamide + L-glutamine + ATP + H2O = 2-formamido-N(1)-(5-O-phospho-beta-D-ribosyl)acetamidine + L-glutamate + ADP + phosphate + H(+). It functions in the pathway purine metabolism; IMP biosynthesis via de novo pathway; 5-amino-1-(5-phospho-D-ribosyl)imidazole from N(2)-formyl-N(1)-(5-phospho-D-ribosyl)glycinamide: step 1/2. Phosphoribosylformylglycinamidine synthase involved in the purines biosynthetic pathway. Catalyzes the ATP-dependent conversion of formylglycinamide ribonucleotide (FGAR) and glutamine to yield formylglycinamidine ribonucleotide (FGAM) and glutamate. The polypeptide is Phosphoribosylformylglycinamidine synthase (Xylella fastidiosa (strain 9a5c)).